Consider the following 262-residue polypeptide: MTKQFAVIGNPIEQSRSPELHHAFAEKLGIELNYSKRLAPLDGFEANVKTFFDQGGLGINVTVPFKEQAFAMCHQLTERAKIAKAVNTLWIENGQLHGDNTDGQGLVDAIQALNWPLQGTRILILGAGGATRGVIYPLVQAGVTEIVIANRTQQRAEQLVQDLAGSVSEATLRVMTLDQLHGNFDLVINATSASLSGDALVLPETLQFKYAYEMAYGKPSSFLDQAKARGVPTTEGFGMLVGQAIEAFSIWHGVKPNLTDFL.

Residues 15 to 17 (SRS) and threonine 62 each bind shikimate. Lysine 66 acts as the Proton acceptor in catalysis. Glutamate 78 lines the NADP(+) pocket. Positions 87 and 102 each coordinate shikimate. NADP(+) is bound by residues 126–130 (GAGGA), 150–155 (NRTQQR), and methionine 214. Residue tyrosine 216 participates in shikimate binding. Glycine 236 lines the NADP(+) pocket.

It belongs to the shikimate dehydrogenase family. Homodimer.

The catalysed reaction is shikimate + NADP(+) = 3-dehydroshikimate + NADPH + H(+). It participates in metabolic intermediate biosynthesis; chorismate biosynthesis; chorismate from D-erythrose 4-phosphate and phosphoenolpyruvate: step 4/7. Its function is as follows. Involved in the biosynthesis of the chorismate, which leads to the biosynthesis of aromatic amino acids. Catalyzes the reversible NADPH linked reduction of 3-dehydroshikimate (DHSA) to yield shikimate (SA). The sequence is that of Shikimate dehydrogenase (NADP(+)) from Acinetobacter baylyi (strain ATCC 33305 / BD413 / ADP1).